We begin with the raw amino-acid sequence, 703 residues long: Neoverrucotoxin subunit alpha (703 aa).

N-acetylserine is present on Ser-2. Positions 508–703 constitute a B30.2/SPRY domain; sequence PRMPFVQGYK…RFDHGTVRLL (196 aa).

Belongs to the SNTX/VTX toxin family. In terms of assembly, heterodimer of alpha and beta subunits. Post-translationally, not glycosylated. Four intrachain disulfide linkages are present in the heterodimer. No interchain disulfide bound links the two subunits. In terms of tissue distribution, expressed by the venom gland.

The protein localises to the secreted. Its function is as follows. Has hemolytic and lethal activities. Its hemolytic activity is inhibited by anionic lipids, especially potently by cardiolipin. In Synanceia verrucosa (Reef stonefish), this protein is Neoverrucotoxin subunit alpha.